We begin with the raw amino-acid sequence, 257 residues long: Imidazole glycerol phosphate synthase subunit HisF (257 aa).

Active-site residues include Asp-11 and Asp-130.

This sequence belongs to the HisA/HisF family. In terms of assembly, heterodimer of HisH and HisF.

It localises to the cytoplasm. The enzyme catalyses 5-[(5-phospho-1-deoxy-D-ribulos-1-ylimino)methylamino]-1-(5-phospho-beta-D-ribosyl)imidazole-4-carboxamide + L-glutamine = D-erythro-1-(imidazol-4-yl)glycerol 3-phosphate + 5-amino-1-(5-phospho-beta-D-ribosyl)imidazole-4-carboxamide + L-glutamate + H(+). It participates in amino-acid biosynthesis; L-histidine biosynthesis; L-histidine from 5-phospho-alpha-D-ribose 1-diphosphate: step 5/9. In terms of biological role, IGPS catalyzes the conversion of PRFAR and glutamine to IGP, AICAR and glutamate. The HisF subunit catalyzes the cyclization activity that produces IGP and AICAR from PRFAR using the ammonia provided by the HisH subunit. The sequence is that of Imidazole glycerol phosphate synthase subunit HisF from Aeromonas hydrophila subsp. hydrophila (strain ATCC 7966 / DSM 30187 / BCRC 13018 / CCUG 14551 / JCM 1027 / KCTC 2358 / NCIMB 9240 / NCTC 8049).